The sequence spans 327 residues: MDVVAGKALQVSDAVYSYQLDGKGGVTSISPDAVATAEQPCWLHLDYTHPDSAAWLQNTPLLPEVVRDGLAGESVRPKVTRLGDGTMITLRGINFNNDARPDQLVTIRVYMTDKLIVSTRHRKVYSIDDVLNDLQSGTGPTNSGNWLVEIVDGLTDHTSEFIEDLHDKIIDLEDDLLEQKIPARGQMALLRKQLIVLRRYMAPQRDVFSRLASERLPWMNDDDRRRMQEISERLGRGLEDLDSSIARTAVLSDEISSLMADAMNRRTYTMSLLAMVFLPTTFLTGLFGVNLGGIPGNTDSFGFATFCMMLVVLVLGVAWWLKHSKWL.

Residues 1-271 (MDVVAGKALQ…AMNRRTYTMS (271 aa)) lie on the Cytoplasmic side of the membrane. A helical transmembrane segment spans residues 272-292 (LLAMVFLPTTFLTGLFGVNLG). Over 293-300 (GIPGNTDS) the chain is Periplasmic. The chain crosses the membrane as a helical span at residues 301–321 (FGFATFCMMLVVLVLGVAWWL). Topologically, residues 322–327 (KHSKWL) are cytoplasmic.

Belongs to the CorA metal ion transporter (MIT) (TC 1.A.35) family.

The protein localises to the cell inner membrane. It carries out the reaction Zn(2+)(out) + H(+)(out) = Zn(2+)(in) + H(+)(in). Zinc transporter. Acts as a Zn(2+):proton symporter, which likely mediates zinc ion uptake. This is Zinc transport protein ZntB from Yersinia enterocolitica serotype O:8 / biotype 1B (strain NCTC 13174 / 8081).